Consider the following 512-residue polypeptide: Proline--tRNA ligase (512 aa).

A compositionally biased stretch (acidic residues) spans 460–470; it reads SDEDDEQDTTD. Residues 460-484 form a disordered region; it reads SDEDDEQDTTDENMGVNNDTTVESN.

It belongs to the class-II aminoacyl-tRNA synthetase family. ProS type 3 subfamily. Homodimer.

It localises to the cytoplasm. It catalyses the reaction tRNA(Pro) + L-proline + ATP = L-prolyl-tRNA(Pro) + AMP + diphosphate. Functionally, catalyzes the attachment of proline to tRNA(Pro) in a two-step reaction: proline is first activated by ATP to form Pro-AMP and then transferred to the acceptor end of tRNA(Pro). The protein is Proline--tRNA ligase of Haloquadratum walsbyi (strain DSM 16790 / HBSQ001).